A 668-amino-acid chain; its full sequence is Kelch repeat-containing protein ARB_01230 (668 aa).

Positions 1 to 32 are cleaved as a signal peptide; sequence MEVGRFASKSASMTYLLLVLLVGFILPQQGQH. The Extracellular portion of the chain corresponds to 33–522; that stretch reads AHARTLARRD…GSGSDGPNIA (490 aa). Residue N60 is glycosylated (N-linked (GlcNAc...) asparagine). Kelch repeat units lie at residues 62–108 and 125–176; these read TLYI…PRGD and SLFL…ANIP. N-linked (GlcNAc...) asparagine glycosylation is found at N251 and N291. 4 Kelch repeats span residues 283–331, 340–395, 396–445, and 463–509; these read ILGL…AVAA, QVYL…IWNS, QIVV…ASQT, and VQSV…GPHA. The chain crosses the membrane as a helical span at residues 523 to 543; that stretch reads AIVAGVIAGCLGVLAIYLGFV. At 544 to 668 the chain is on the cytoplasmic side; it reads TWLYRRRLAI…PRQTLRVINQ (125 aa). The interval 611 to 642 is disordered; sequence DNQRHNHTRSSSGGNFDHLAQPERPSTSSSVE.

The protein resides in the membrane. It localises to the secreted. The protein is Kelch repeat-containing protein ARB_01230 of Arthroderma benhamiae (strain ATCC MYA-4681 / CBS 112371) (Trichophyton mentagrophytes).